We begin with the raw amino-acid sequence, 299 residues long: MKLVFLGTSAAQPTENRGLSCICLEREGEVLMFDAGEAAQISYMKSGLGWNKKMKIFVTHLHGDHCVGILGLLQTMSMQNRTESLEIFGPSGIEEFIAANIKVLNFGLSFPILINTIKDEKIFEDEKFLIRTCKANHSIIAFSYLFEEKDKPGRFNVEKAKELGIPEGELWNKLQNGNEITVNEKIIKPEQVLGERRPGKKIGISGDTMPTKELEEFFEECDYLVFDSTFLEAEKQKAQDTCHSTAKQAATVAKNAKVKNLVLTHFSARYRDEVEHLREAKEIHDSVITAKDLLEIEIK.

Zn(2+)-binding residues include H60, H62, D64, H65, H137, D207, and H265. The active-site Proton acceptor is D64.

This sequence belongs to the RNase Z family. As to quaternary structure, homodimer. Requires Zn(2+) as cofactor.

The catalysed reaction is Endonucleolytic cleavage of RNA, removing extra 3' nucleotides from tRNA precursor, generating 3' termini of tRNAs. A 3'-hydroxy group is left at the tRNA terminus and a 5'-phosphoryl group is left at the trailer molecule.. Its function is as follows. Zinc phosphodiesterase, which displays some tRNA 3'-processing endonuclease activity. Probably involved in tRNA maturation, by removing a 3'-trailer from precursor tRNA. In Nitrosopumilus maritimus (strain SCM1), this protein is Ribonuclease Z.